We begin with the raw amino-acid sequence, 693 residues long: FAST kinase domain-containing protein 2, mitochondrial (693 aa).

S110 and S124 each carry phosphoserine. The RAP domain maps to 618 to 675; sequence VAVLCVSRSAYCLGSSHPRGFLAMKMRHLNAMGFRVILVNNWEMDKLEMEDAVTFLKT. The residue at position 692 (S692) is a Phosphoserine.

The protein belongs to the FAST kinase family. As to quaternary structure, monomer. Found in a complex with GRSF1, DDX28, DHX30 and FASTKD5. Associates with the 16S mitochondrial rRNA (16S mt-rRNA). Forms a regulatory protein-RNA complex, consisting of RCC1L, NGRN, RPUSD3, RPUSD4, TRUB2, FASTKD2 and 16S mt-rRNA.

It is found in the mitochondrion matrix. It localises to the mitochondrion nucleoid. Functionally, plays an important role in assembly of the mitochondrial large ribosomal subunit. As a component of a functional protein-RNA module, consisting of RCC1L, NGRN, RPUSD3, RPUSD4, TRUB2, FASTKD2 and 16S mitochondrial ribosomal RNA (16S mt-rRNA), controls 16S mt-rRNA abundance and is required for intra-mitochondrial translation. May play a role in mitochondrial apoptosis. The chain is FAST kinase domain-containing protein 2, mitochondrial (FASTKD2) from Pongo abelii (Sumatran orangutan).